A 196-amino-acid polypeptide reads, in one-letter code: Ribosomal RNA small subunit methyltransferase G (196 aa).

S-adenosyl-L-methionine-binding positions include G77, F82, 127 to 128 (AE), and R140.

This sequence belongs to the methyltransferase superfamily. RNA methyltransferase RsmG family.

It is found in the cytoplasm. In terms of biological role, specifically methylates the N7 position of a guanine in 16S rRNA. In Aquifex aeolicus (strain VF5), this protein is Ribosomal RNA small subunit methyltransferase G.